The chain runs to 105 residues: MISVDFSKGLVPTIILDDQNGDVLMLAYMNEESYQKTLETGYTWFFSRSRNELWNKGATSGHTQKVKQIWTDCDNDTLLIRVTQIGPACHTGKKSCFFNLIKEDF.

Mg(2+) is bound at residue D72. A Zn(2+)-binding site is contributed by C73. Residues D74 and D76 each coordinate Mg(2+). Residues C89 and C96 each contribute to the Zn(2+) site.

Belongs to the PRA-CH family. As to quaternary structure, homodimer. Mg(2+) serves as cofactor. Zn(2+) is required as a cofactor.

The protein resides in the cytoplasm. It carries out the reaction 1-(5-phospho-beta-D-ribosyl)-5'-AMP + H2O = 1-(5-phospho-beta-D-ribosyl)-5-[(5-phospho-beta-D-ribosylamino)methylideneamino]imidazole-4-carboxamide. Its pathway is amino-acid biosynthesis; L-histidine biosynthesis; L-histidine from 5-phospho-alpha-D-ribose 1-diphosphate: step 3/9. Catalyzes the hydrolysis of the adenine ring of phosphoribosyl-AMP. In Listeria monocytogenes serovar 1/2a (strain ATCC BAA-679 / EGD-e), this protein is Phosphoribosyl-AMP cyclohydrolase.